Here is a 175-residue protein sequence, read N- to C-terminus: Inner membrane protein p54 (175 aa).

Residues 32-52 (CTILVAIVVLIIIIIVLIYLF) traverse the membrane as a helical segment. Polar residues predominate over residues 79-89 (QWAGATPQPGT). Residues 79–121 (QWAGATPQPGTSKPAGATTGNVGKPITDRPATDRPVTNNPVTD) are disordered. The segment at 141–153 (YTTATTQNTASQT) is interaction with host DYNLL1.

The protein belongs to the asfivirus envelope protein p54 family. In terms of assembly, interacts with the host light chain cytoplasmic dynein DYNLL1; this interaction is critical for intracellular microtubule-dependent virus transport toward viral factories.

The protein localises to the virion membrane. It localises to the host cytoplasm. It is found in the host cytoskeleton. Its subcellular location is the host endoplasmic reticulum membrane. Inner envelope protein involved, through its interaction with host dynein, in the intracellular microtubule-dependent transport of viral capsid toward viral factories. Seems to induce caspase-3 activation and apoptosis. Plays a role in virion morphogenesis by recruiting and transforming the host ER membranes into the precursors of the viral envelope. Involved in virus attachment to the host cell. In African swine fever virus (isolate Pig/Kenya/KEN-50/1950) (ASFV), this protein is Inner membrane protein p54.